A 68-amino-acid polypeptide reads, in one-letter code: Virion membrane protein OPG139 (68 aa).

A helical transmembrane segment spans residues methionine 1–alanine 21. The Virion surface segment spans residues methionine 22–valine 68.

This sequence belongs to the orthopoxvirus OPG139 family. Post-translationally, phosphorylated by a OPG054-independent mechanism.

It localises to the virion membrane. In terms of biological role, essential for the encapsidation of DNA into immature virions (IV) and the subsequent maturation of IV into mature virions (MV). This is Virion membrane protein OPG139 (OPG139) from Homo sapiens (Human).